Reading from the N-terminus, the 516-residue chain is Protein indeterminate-domain 4, chloroplastic (516 aa).

A compositionally biased stretch (low complexity) spans 1 to 26 (MSSSSYNTSVIPSSSSSAQPFFITSS). A disordered region spans residues 1 to 68 (MSSSSYNTSV…QPGNPNPDAE (68 aa)). The transit peptide at 1–70 (MSSSSYNTSV…GNPNPDAEVV (70 aa)) directs the protein to the chloroplast. Phosphoserine is present on S73. C2H2-type zinc fingers lie at residues 83 to 105 (FICD…RRGH) and 124 to 154 (YLCP…YRKH). The short motif at 146–153 (IKKHYYRK) is the Nuclear localization signal element. The C2H2-type 2; degenerate zinc finger occupies 159–182 (WKCEKCSKRYAVQSDWKAHSKTCG). The Zn(2+) site is built by C161, C164, H177, C181, C188, C190, H203, and C207. The CCHC-type 2; atypical zinc-finger motif lies at 186–209 (YRCDCGTIFSRRDSYITHRAFCDA). The SHR-binding stretch occupies residues 196 to 208 (RRDSYITHRAFCD). The disordered stretch occupies residues 483-516 (NRGGGGGGRGSARGGVSLDGEAKFPEQNYPFGRG). The span at 484 to 495 (RGGGGGGRGSAR) shows a compositional bias: gly residues.

Binds to RGA and SCL3 competitively in the nucleus.

It localises to the plastid. The protein localises to the chloroplast. It is found in the nucleus. In terms of biological role, transcription factor that may act a transcriptional activator of nuclear-encoded photosynthetic gene expression. Binds DNA via its zinc fingers. Recognizes and binds to SCL3 promoter sequence 5'-AGACAA-3' to promote its expression when in complex with RGA. The protein is Protein indeterminate-domain 4, chloroplastic of Arabidopsis thaliana (Mouse-ear cress).